A 423-amino-acid chain; its full sequence is Transcription factor bHLH14 (423 aa).

The segment at 192-243 is disordered; the sequence is GKTTKHTNQTGSYPKPAVSDHSKSGNQQFGSERKRRRKLETTRVAAATKEKH. One can recognise a bHLH domain in the interval 245-294; the sequence is PAVLSHVEAEKQRREKLNHRFYALRAIVPKVSRMDKASLLSDAVSYIESL. Positions 312-343 are disordered; it reads ETDKLDNSSSNTSPSSVEYQVNQKPSKSNRGS. A compositionally biased stretch (low complexity) spans 318–327; that stretch reads NSSSNTSPSS. Positions 328–342 are enriched in polar residues; that stretch reads VEYQVNQKPSKSNRG.

As to quaternary structure, homodimer.

It is found in the nucleus. The polypeptide is Transcription factor bHLH14 (BHLH14) (Arabidopsis thaliana (Mouse-ear cress)).